Consider the following 509-residue polypeptide: Erythropoietin receptor (509 aa).

Positions 1 to 24 (MYHFGATLWPGVGSLCLLLAGATW) are cleaved as a signal peptide. Residues 25–251 (APSPNSPDAK…SLLTASDLDP (227 aa)) are Extracellular-facing. 2 disulfide bridges follow: Cys-52/Cys-62 and Cys-91/Cys-107. The Fibronectin type-III domain maps to 148-248 (PPAGLLARRA…EPASLLTASD (101 aa)). The N-linked (GlcNAc...) asparagine glycan is linked to Asn-184. Residues 234-238 (WSAWS) carry the WSXWS motif motif. A helical membrane pass occupies residues 252 to 274 (LILTLSLILVLILLLLAVLALLS). Residues 275-509 (HRRTLKQKIW…PSPPNYVTCS (235 aa)) are Cytoplasmic-facing. A Glycyl lysine isopeptide (Lys-Gly) (interchain with G-Cter in ubiquitin) cross-link involves residue Lys-282. The Box 1 motif signature appears at 283–291 (IWPGIPSPE). Phosphotyrosine; by JAK2 is present on residues Tyr-369 and Tyr-427. An ITIM motif motif is present at residues 453 to 458 (LKYLYL). Lys-454 is covalently cross-linked (Glycyl lysine isopeptide (Lys-Gly) (interchain with G-Cter in ubiquitin)). 6 positions are modified to phosphotyrosine; by JAK2: Tyr-455, Tyr-457, Tyr-469, Tyr-486, Tyr-490, and Tyr-505. The segment at 467–509 (TDYSSGGSQETQGGSSSGPYSNPYENSLVPAPEPSPPNYVTCS) is disordered. The span at 470 to 493 (SSGGSQETQGGSSSGPYSNPYENS) shows a compositional bias: low complexity.

Belongs to the type I cytokine receptor family. Type 1 subfamily. In terms of assembly, forms homodimers on EPO stimulation. The tyrosine-phosphorylated form interacts with several SH2 domain-containing proteins including LYN, the adapter protein SH2B2, PTPN6, PTPN11, JAK2, PI3 kinases, STAT5A/B, SOCS3, CRKL. Interacts with INPP5D/SHIP1. SH2B2 binding inhibits the JAK-STAT signaling. Interacts with RHEX; this interaction occurs in a erythropoietin (EPO)-dependent manner. Interacts with ATXN2L. In terms of processing, on EPO stimulation, phosphorylated on C-terminal tyrosine residues by JAK2. The phosphotyrosine motifs are also recruitment sites for several SH2-containing proteins and adapter proteins which mediate cell proliferation. Phosphorylation on Tyr-455 is required for PTPN6 interaction, Tyr-427 for PTPN11. Tyr-427 is also required for SOCS3 binding, but Tyr-455/Tyr-457 motif is the preferred binding site. Post-translationally, ubiquitinated by the ECS(SOCS2) complex following ligand-binding and phosphorylation by JAK2, leading to its degradation by the proteasome. Regulation by the ECS(SOCS2) complex acts as a negative feedback loop of erythropoietin-mediated signaling pathway. Ubiquitination at Lys-282 mediates receptor internalization, whereas ubiquitination at Lys-454 promotes trafficking of activated receptors to the lysosomes for degradation. Ubiquitinated by NOSIP; appears to be either multi-monoubiquitinated or polyubiquitinated. Ubiquitination mediates proliferation and survival of EPO-dependent cells.

It localises to the cell membrane. In terms of biological role, receptor for erythropoietin, which mediates erythropoietin-induced erythroblast proliferation and differentiation. Upon EPO stimulation, EPOR dimerizes triggering the JAK2/STAT5 signaling cascade. In some cell types, can also activate STAT1 and STAT3. May also activate the LYN tyrosine kinase. Functionally, isoform EPOR-T acts as a dominant-negative receptor of EPOR-mediated signaling. The sequence is that of Erythropoietin receptor (EPOR) from Sus scrofa (Pig).